A 398-amino-acid chain; its full sequence is MSKLVLVLNCGSSSLKFAIVDAVSGEEHLTGLAECLHLPEARIKWKLDGKHEAQLGDGAAHEEALAFMVESIIASKPEFAANLAAIGHRVVHGGEKFTQSVLIDETVVKGIEDCSALAPLHNPAHIIGIKAAQKAFPALKNVAVFDTAFHQTMPEEAYLYALPYNLYTDHAIRRYGMHGTSHLFITRVTAELLEKPVDELNIINCHLGNGASVCAIKNGKSVDTSMGLTPLEGLVMGTRCGDIDPAIIFHLHDTLGYSVEKINNMLTKESGLQGLTQVTSDCRFVEDNYGKKEEATRAMDVFCHRLAKYVAGYTATLEGRLDAITFTGGIGENSAPIREMVLNRLAILGVEVDVEANLKARFGKEGVITTANSRVPAMVVSTNEELVIAEDTARLAAI.

Asn-9 is a Mg(2+) binding site. Lys-16 contributes to the ATP binding site. Arg-89 lines the substrate pocket. Catalysis depends on Asp-146, which acts as the Proton donor/acceptor. Residues 206–210, 281–283, and 329–333 each bind ATP; these read HLGNG, DCR, and GIGEN. Glu-384 is a Mg(2+) binding site.

Belongs to the acetokinase family. In terms of assembly, homodimer. Requires Mg(2+) as cofactor. It depends on Mn(2+) as a cofactor.

The protein localises to the cytoplasm. The enzyme catalyses acetate + ATP = acetyl phosphate + ADP. The protein operates within metabolic intermediate biosynthesis; acetyl-CoA biosynthesis; acetyl-CoA from acetate: step 1/2. Catalyzes the formation of acetyl phosphate from acetate and ATP. Can also catalyze the reverse reaction. The protein is Acetate kinase 1 of Photobacterium profundum (strain SS9).